The primary structure comprises 304 residues: Probable aspartoacylase (304 aa).

2 residues coordinate Zn(2+): His-13 and Glu-16. Residues Arg-55 and 62-63 (NR) contribute to the substrate site. His-104 lines the Zn(2+) pocket. Residues Glu-162 and Tyr-272 each coordinate substrate.

Belongs to the AspA/AstE family. Aspartoacylase subfamily. It depends on Zn(2+) as a cofactor.

The enzyme catalyses an N-acyl-L-aspartate + H2O = a carboxylate + L-aspartate. This is Probable aspartoacylase from Synechococcus sp. (strain CC9605).